The chain runs to 400 residues: MKKDYYETLGVTRSSNKDDIKKAYRKLAVQYHPDKNPGNKEAEEHFKEVNEAYEVLSNDDKRRRYDQFGHAGVGSSAASGGGGAYAGGADFSDIFSAFNDMFTGGGARRGGSPFGGFEDAFGGGGGGGARRRASSGIHGTDLKIRLKLTLEEIAKGVEKTLKVKRQVPCEVCNGTGSKTGATETCQTCHGSGEVRQVSKTMFGQFVNIAACPTCGGEGRTIKERCTACYGEGIKLGETTVKINVPAGVENGNYMTMRGQGNAGPRGGAAGDLIVVFEEIHHETFTRNGHDVIYNLAVSYPDMVLGTKVEVPTLDGAVKLTIPAGTQPETMLRIQGHGIGHLKGGGRGDQYVKVNVFVPKEVSHQDKELLKDLRKSSNLCPNAHHDSESKSFFEKARDIFS.

The J domain maps to aspartate 4 to glycine 69. The CR-type zinc-finger motif lies at glycine 156 to glutamate 237. Cysteine 169, cysteine 172, cysteine 185, cysteine 188, cysteine 211, cysteine 214, cysteine 225, and cysteine 228 together coordinate Zn(2+). CXXCXGXG motif repeat units follow at residues cysteine 169–glycine 176, cysteine 185–glycine 192, cysteine 211–glycine 218, and cysteine 225–glycine 232.

This sequence belongs to the DnaJ family. As to quaternary structure, homodimer. Requires Zn(2+) as cofactor.

The protein resides in the cytoplasm. Functionally, participates actively in the response to hyperosmotic and heat shock by preventing the aggregation of stress-denatured proteins and by disaggregating proteins, also in an autonomous, DnaK-independent fashion. Unfolded proteins bind initially to DnaJ; upon interaction with the DnaJ-bound protein, DnaK hydrolyzes its bound ATP, resulting in the formation of a stable complex. GrpE releases ADP from DnaK; ATP binding to DnaK triggers the release of the substrate protein, thus completing the reaction cycle. Several rounds of ATP-dependent interactions between DnaJ, DnaK and GrpE are required for fully efficient folding. Also involved, together with DnaK and GrpE, in the DNA replication of plasmids through activation of initiation proteins. This is Chaperone protein DnaJ from Chlorobium chlorochromatii (strain CaD3).